The primary structure comprises 95 residues: Small ribosomal subunit protein uS19 (95 aa).

This sequence belongs to the universal ribosomal protein uS19 family.

Its function is as follows. Protein S19 forms a complex with S13 that binds strongly to the 16S ribosomal RNA. The polypeptide is Small ribosomal subunit protein uS19 (Lactobacillus gasseri (strain ATCC 33323 / DSM 20243 / BCRC 14619 / CIP 102991 / JCM 1131 / KCTC 3163 / NCIMB 11718 / NCTC 13722 / AM63)).